We begin with the raw amino-acid sequence, 34 residues long: Photosystem II reaction center protein Psb30 (34 aa).

The chain crosses the membrane as a helical span at residues 5–25; that stretch reads VLFQLTALIFVVAAGPLVIVL.

The protein belongs to the Psb30/Ycf12 family. In terms of assembly, PSII is composed of 1 copy each of membrane proteins PsbA, PsbB, PsbC, PsbD, PsbE, PsbF, PsbH, PsbI, PsbJ, PsbK, PsbL, PsbM, PsbT, PsbX, PsbY, PsbZ, Psb30/Ycf12, peripheral proteins of the oxygen-evolving complex and a large number of cofactors. It forms dimeric complexes.

The protein localises to the plastid. Its subcellular location is the chloroplast thylakoid membrane. Its function is as follows. A core subunit of photosystem II (PSII), probably helps stabilize the reaction center. The protein is Photosystem II reaction center protein Psb30 of Tupiella akineta (Green alga).